A 445-amino-acid polypeptide reads, in one-letter code: Trigger factor (445 aa).

The region spanning 168–253 (GDAVIVDFVG…IHEVRAPQTP (86 aa)) is the PPIase FKBP-type domain.

It belongs to the FKBP-type PPIase family. Tig subfamily.

The protein resides in the cytoplasm. It carries out the reaction [protein]-peptidylproline (omega=180) = [protein]-peptidylproline (omega=0). Its function is as follows. Involved in protein export. Acts as a chaperone by maintaining the newly synthesized protein in an open conformation. Functions as a peptidyl-prolyl cis-trans isomerase. This is Trigger factor from Hyphomonas neptunium (strain ATCC 15444).